We begin with the raw amino-acid sequence, 173 residues long: Invasion protein B homolog BruAb1_0366 (173 aa).

A signal peptide spans 1–23 (MKNYRAIGLAFTFTALSSLSAFA).

It belongs to the IalB family.

This Brucella abortus biovar 1 (strain 9-941) protein is Invasion protein B homolog BruAb1_0366.